The primary structure comprises 313 residues: tRNA dimethylallyltransferase (313 aa).

9–16 (GPTASGKT) is a binding site for ATP. 11–16 (TASGKT) contributes to the substrate binding site. Residues 34-37 (DSMQ) are interaction with substrate tRNA.

The protein belongs to the IPP transferase family. As to quaternary structure, monomer. Mg(2+) serves as cofactor.

It carries out the reaction adenosine(37) in tRNA + dimethylallyl diphosphate = N(6)-dimethylallyladenosine(37) in tRNA + diphosphate. Functionally, catalyzes the transfer of a dimethylallyl group onto the adenine at position 37 in tRNAs that read codons beginning with uridine, leading to the formation of N6-(dimethylallyl)adenosine (i(6)A). In Acetivibrio thermocellus (strain ATCC 27405 / DSM 1237 / JCM 9322 / NBRC 103400 / NCIMB 10682 / NRRL B-4536 / VPI 7372) (Clostridium thermocellum), this protein is tRNA dimethylallyltransferase.